The sequence spans 334 residues: D-alanine--D-alanine ligase (334 aa).

In terms of domain architecture, ATP-grasp spans 110–306 (KHVLKSLGID…FDHVVDLIVQ (197 aa)). 138-190 (LPYPFVIKPVRGGSTIGVHAIFSKSEYLDLSAHADTLEDRMIVEEYVSGQEVQ) lines the ATP pocket. Positions 258, 272, and 274 each coordinate Mg(2+).

This sequence belongs to the D-alanine--D-alanine ligase family. The cofactor is Mg(2+). It depends on Mn(2+) as a cofactor.

The protein localises to the cytoplasm. The catalysed reaction is 2 D-alanine + ATP = D-alanyl-D-alanine + ADP + phosphate + H(+). Its pathway is cell wall biogenesis; peptidoglycan biosynthesis. Cell wall formation. The protein is D-alanine--D-alanine ligase of Anaplasma marginale (strain Florida).